A 414-amino-acid chain; its full sequence is MTSNGSQPQASTPMVSAEEPAAAASVPNSTPMVSAEGPAAAVSAPNSSVVSSAPASAPTASEPVISQVQSLAPIVSGFDPNLHGRLTNEQMRQAQNEAAMQGYEEGSRRNPRLPSSTTAHNDYASMNSNPFETGTAYGGAPRVSFGSYPTFPGSGSASEPNSQRIFPQQHGVNPPAHASDLVPHQATSGGNTGTPFTLGNRAPRNATANTGGMRRRLDSVGLKNIRYEPQAGVVASNQKIRAVGVALIGMGIPEHQLTEVGVYLARHCADVGASDKSALLGTFPGSDITLEEVGTMIKQTEGCTLRQYCAFYAKHVWNLMLQTQSPPANWVGKEFKFETRYAAFDFFFGVESTASLEPADGLIRLPTQAERVANATSKEIQMYRIRSMEGTQAVNFGEVTGGKIGPKPVLSIRK.

Over residues Met1 to Met14 the composition is skewed to polar residues. Disordered regions lie at residues Met1–Ala60, Ala94–Asn127, and Tyr148–Gly212. Composition is skewed to low complexity over residues Val15–Pro27 and Pro38–Ala60. 3 stretches are compositionally biased toward polar residues: residues Leu113 to Asn127, Gly153 to Phe166, and Gln185 to Thr197.

The protein localises to the virion. This chain is Capsid protein, found in Crataegus (hawthorn).